A 122-amino-acid polypeptide reads, in one-letter code: Large ribosomal subunit protein uL14 (122 aa).

Belongs to the universal ribosomal protein uL14 family. As to quaternary structure, part of the 50S ribosomal subunit. Forms a cluster with proteins L3 and L19. In the 70S ribosome, L14 and L19 interact and together make contacts with the 16S rRNA in bridges B5 and B8.

Binds to 23S rRNA. Forms part of two intersubunit bridges in the 70S ribosome. This Borreliella afzelii (strain PKo) (Borrelia afzelii) protein is Large ribosomal subunit protein uL14.